A 152-amino-acid chain; its full sequence is Deoxyuridine 5'-triphosphate nucleotidohydrolase (152 aa).

Residues 71–73 (RSG), N84, 88–90 (LID), and M98 contribute to the substrate site.

Belongs to the dUTPase family. It depends on Mg(2+) as a cofactor.

It catalyses the reaction dUTP + H2O = dUMP + diphosphate + H(+). It functions in the pathway pyrimidine metabolism; dUMP biosynthesis; dUMP from dCTP (dUTP route): step 2/2. Its function is as follows. This enzyme is involved in nucleotide metabolism: it produces dUMP, the immediate precursor of thymidine nucleotides and it decreases the intracellular concentration of dUTP so that uracil cannot be incorporated into DNA. The sequence is that of Deoxyuridine 5'-triphosphate nucleotidohydrolase from Shewanella amazonensis (strain ATCC BAA-1098 / SB2B).